Consider the following 125-residue polypeptide: Probable 4-amino-4-deoxy-L-arabinose-phosphoundecaprenol flippase subunit ArnF (125 aa).

The Cytoplasmic segment spans residues 1–2 (MG). A helical transmembrane segment spans residues 3–23 (VMWGLISVAIASLAQLSLGFA). The Periplasmic segment spans residues 24-33 (MMRLPSIAHP). A helical membrane pass occupies residues 34 to 54 (LAFISGLGAFNAATLALFAGL). Residues 55 to 76 (AGYLVSVFCWQKTLHTLALSKA) lie on the Cytoplasmic side of the membrane. A helical membrane pass occupies residues 77-97 (YALLSLSYVLVWVASMLLPGL). The Periplasmic portion of the chain corresponds to 98 to 100 (QGA). A helical membrane pass occupies residues 101–121 (FSLKAMLGVLCIMAGVMLIFL). The Cytoplasmic portion of the chain corresponds to 122–125 (PARS).

It belongs to the ArnF family. Heterodimer of ArnE and ArnF.

The protein localises to the cell inner membrane. Its pathway is bacterial outer membrane biogenesis; lipopolysaccharide biosynthesis. In terms of biological role, translocates 4-amino-4-deoxy-L-arabinose-phosphoundecaprenol (alpha-L-Ara4N-phosphoundecaprenol) from the cytoplasmic to the periplasmic side of the inner membrane. This chain is Probable 4-amino-4-deoxy-L-arabinose-phosphoundecaprenol flippase subunit ArnF, found in Salmonella choleraesuis (strain SC-B67).